The primary structure comprises 266 residues: Type II iodothyronine deiodinase (266 aa).

The Lumenal portion of the chain corresponds to 1-13; that stretch reads MGSASEDLLVTLQ. Residues 14–34 form a helical; Signal-anchor for type III membrane protein membrane-spanning segment; sequence ILPGFFSNCLFLALYDSVVLV. Residues 35-266 are Cytoplasmic-facing; it reads KRVVALLSRS…QWLELSYGRR (232 aa). U134 is an active-site residue. Position 134 (U134) is a non-standard amino acid, selenocysteine.

This sequence belongs to the iodothyronine deiodinase family. As to quaternary structure, predominantly monomer. Can form homodimers but homodimerization is not essential for enzyme activity.

It localises to the endoplasmic reticulum membrane. The catalysed reaction is 3,3',5-triiodo-L-thyronine + iodide + A + H(+) = L-thyroxine + AH2. The enzyme catalyses 3,3'-diiodo-L-thyronine + iodide + A + H(+) = 3,3',5'-triiodo-L-thyronine + AH2. It carries out the reaction 3'-iodo-L-thyronine + iodide + A + H(+) = 3',5'-diiodo-L-thyronine + AH2. Not inhibited by N(6)-propylthiouracil. Plays a crucial role in the metabolism of thyroid hormones (TH) and has specific roles in TH activation and inactivation by deiodination. Catalyzes the conversion of T4 (L-thyroxine/3,5,3',5'-tetraiodothyronine) to T3 (3,5,3'-triiodothyronine) and rT3 (3,3',5'-triiodothyronine) to T2 (3,3'-diiodothyronine) via outer-ring deiodination (ORD). Catalyzes the conversion 3',5'-T2 (3,5-diiodothyronine) to 3-T1 (3-monoiodothyronine) via ORD. This is Type II iodothyronine deiodinase (dio2) from Fundulus heteroclitus (Killifish).